We begin with the raw amino-acid sequence, 293 residues long: 3-methyl-2-oxobutanoate hydroxymethyltransferase (293 aa).

The tract at residues 1-29 is disordered; sequence MTAAHDRSENQPGRPGGETTAPYGSAPRR. Mg(2+)-binding residues include aspartate 73 and aspartate 112. Residues 73–74, aspartate 112, and lysine 142 each bind 3-methyl-2-oxobutanoate; that span reads DS. Residue glutamate 144 coordinates Mg(2+). The Proton acceptor role is filled by glutamate 210.

It belongs to the PanB family. Homodecamer; pentamer of dimers. It depends on Mg(2+) as a cofactor.

It localises to the cytoplasm. The enzyme catalyses 3-methyl-2-oxobutanoate + (6R)-5,10-methylene-5,6,7,8-tetrahydrofolate + H2O = 2-dehydropantoate + (6S)-5,6,7,8-tetrahydrofolate. Its pathway is cofactor biosynthesis; (R)-pantothenate biosynthesis; (R)-pantoate from 3-methyl-2-oxobutanoate: step 1/2. Its function is as follows. Catalyzes the reversible reaction in which hydroxymethyl group from 5,10-methylenetetrahydrofolate is transferred onto alpha-ketoisovalerate to form ketopantoate. In Saccharopolyspora erythraea (strain ATCC 11635 / DSM 40517 / JCM 4748 / NBRC 13426 / NCIMB 8594 / NRRL 2338), this protein is 3-methyl-2-oxobutanoate hydroxymethyltransferase.